The sequence spans 363 residues: NAD(P)H-quinone oxidoreductase subunit 1, chloroplastic (363 aa).

The next 7 membrane-spanning stretches (helical) occupy residues 26–46 (IIWILIPIFTLVLGITIGVLV), 98–118 (FSIGPSIAVISILLSYSVIPF), 127–147 (LTIGVFLWIAISSIAPIGLLM), 246–266 (TEYSGIKFGLFYVASYLNLLV), 268–288 (SLFVTVLYLGGWNLSIPYIFV), 300–320 (VFGPVIGIFITLAKTYLFLFI), and 336–356 (LLNLGWKFLLPISLGNLLLTT).

The protein belongs to the complex I subunit 1 family. In terms of assembly, NDH is composed of at least 16 different subunits, 5 of which are encoded in the nucleus.

The protein localises to the plastid. The protein resides in the chloroplast thylakoid membrane. It carries out the reaction a plastoquinone + NADH + (n+1) H(+)(in) = a plastoquinol + NAD(+) + n H(+)(out). The enzyme catalyses a plastoquinone + NADPH + (n+1) H(+)(in) = a plastoquinol + NADP(+) + n H(+)(out). Functionally, NDH shuttles electrons from NAD(P)H:plastoquinone, via FMN and iron-sulfur (Fe-S) centers, to quinones in the photosynthetic chain and possibly in a chloroplast respiratory chain. The immediate electron acceptor for the enzyme in this species is believed to be plastoquinone. Couples the redox reaction to proton translocation, and thus conserves the redox energy in a proton gradient. The sequence is that of NAD(P)H-quinone oxidoreductase subunit 1, chloroplastic from Coffea arabica (Arabian coffee).